The chain runs to 360 residues: DNA replication and repair protein RecF (360 aa).

Residue 30–37 coordinates ATP; that stretch reads GQNGSGKT.

This sequence belongs to the RecF family.

It is found in the cytoplasm. In terms of biological role, the RecF protein is involved in DNA metabolism; it is required for DNA replication and normal SOS inducibility. RecF binds preferentially to single-stranded, linear DNA. It also seems to bind ATP. In Shewanella putrefaciens (strain CN-32 / ATCC BAA-453), this protein is DNA replication and repair protein RecF.